The following is a 323-amino-acid chain: Ferrochelatase (323 aa).

Positions 196 and 277 each coordinate Fe cation.

It belongs to the ferrochelatase family.

It localises to the cytoplasm. The catalysed reaction is heme b + 2 H(+) = protoporphyrin IX + Fe(2+). Its pathway is porphyrin-containing compound metabolism; protoheme biosynthesis; protoheme from protoporphyrin-IX: step 1/1. Functionally, catalyzes the ferrous insertion into protoporphyrin IX. The protein is Ferrochelatase of Haemophilus influenzae (strain 86-028NP).